The following is a 142-amino-acid chain: Transcription antitermination protein NusB (142 aa).

Belongs to the NusB family.

Involved in transcription antitermination. Required for transcription of ribosomal RNA (rRNA) genes. Binds specifically to the boxA antiterminator sequence of the ribosomal RNA (rrn) operons. The chain is Transcription antitermination protein NusB from Thermobifida fusca (strain YX).